Here is a 574-residue protein sequence, read N- to C-terminus: Meiotically up-regulated gene 72 protein (574 aa).

The disordered stretch occupies residues 339 to 374 (VRAGTPQSSPNFNPAMRRSPVGAASRSPSRSTIGIS). Residue Thr343 is modified to Phosphothreonine. The span at 364 to 374 (RSPSRSTIGIS) shows a compositional bias: polar residues. The residue at position 392 (Ser392) is a Phosphoserine. 2 disordered regions span residues 422-451 (TSPSGLNPTGRPSRFGGRVRGNPLTMNKAG) and 495-574 (RNRR…RRMD). Positions 541–554 (LYDTSRYPTRNSKP) are enriched in polar residues.

It localises to the cytoplasm. Functionally, has a role in meiosis. The polypeptide is Meiotically up-regulated gene 72 protein (mug72) (Schizosaccharomyces pombe (strain 972 / ATCC 24843) (Fission yeast)).